Reading from the N-terminus, the 295-residue chain is Adrenocorticotropic hormone receptor (295 aa).

Over 1–23 (MRHILNLYENINSTARNNSDCPA) the chain is Extracellular. Residues asparagine 12 and asparagine 17 are each glycosylated (N-linked (GlcNAc...) asparagine). 2 cysteine pairs are disulfide-bonded: cysteine 21-cysteine 253 and cysteine 245-cysteine 251. Residues 24-49 (VILPEEIFFTVSIVGVLENLMVLLAV) form a helical membrane-spanning segment. The Cytoplasmic segment spans residues 50 to 58 (AKNKSLQSP). A helical membrane pass occupies residues 59–79 (MYFFICSLAISDMLGSLYKIL). At 80 to 104 (ENVLIMFRNMGYLEPRGSFESTADD) the chain is on the extracellular side. The helical transmembrane segment at 105–126 (VVDSLFILSLLGSICSLSVIAA) threads the bilayer. At 127–147 (DRYITIFHALQYHSIVTMHRA) the chain is on the cytoplasmic side. A helical membrane pass occupies residues 148-168 (LVVLTVLWAGCTGSGITIVTF). Over 169–180 (SHHVPTVIAFTA) the chain is Extracellular. The chain crosses the membrane as a helical span at residues 181–199 (LFPLMLAFILCLYVHMFLL). The Cytoplasmic segment spans residues 200 to 217 (ARSHARRTSSLPKANMRG). The helical transmembrane segment at 218–244 (AITLTVLLGVFIFCWAPFVLHVLLMTF) threads the bilayer. At 245-256 (CPADPYCACYMS) the chain is on the extracellular side. A helical transmembrane segment spans residues 257–278 (LFQVNGVLIMCNAVIDPFIYAF). The Cytoplasmic portion of the chain corresponds to 279 to 295 (RSPELRVAFKKMVICNW). The S-palmitoyl cysteine moiety is linked to residue cysteine 293.

The protein belongs to the G-protein coupled receptor 1 family. In terms of assembly, homodimer. Interacts with corticotropin (ACTH). Interacts with MRAP; this interaction targets MC2R to the plasma membrane. Interacts with MRAP2; competing with MRAP for binding to MC2R and impairing the binding of corticotropin (ACTH). Post-translationally, ubiquitinated by MGRN1 that may be involved in post-endocytic trafficking and/or degradation of internalized receptor.

Its subcellular location is the cell membrane. In terms of biological role, hormone receptor primarily expressed in adrenal cortex that plays a key role in regulating adrenocortical function. Upon corticotropin (ACTH) binding, facilitates the release of adrenal glucocorticoids, including cortisol and corticosterone. In addition, MC2R is required for fetal and neonatal adrenal gland development. Mechanistically, activates adenylate cyclase (cAMP), the MAPK cascade as well as the cAMP-dependent protein kinase A pathway leading to steroidogenic factor 1/NR5A1-mediated transcriptional activation. The protein is Adrenocorticotropic hormone receptor (MC2R) of Ovis aries (Sheep).